Here is an 829-residue protein sequence, read N- to C-terminus: E3 ubiquitin-protein ligase Jade-2 (829 aa).

Residues 1–52 (MEEKRRKYSISSDNSDTTDGHVTSTSASRCSKLPSSTKSGWPRQNEKKPSEV) are disordered. A phosphoserine mark is found at Ser9 and Ser15. The span at 9–39 (SISSDNSDTTDGHVTSTSASRCSKLPSSTKS) shows a compositional bias: polar residues. N6-acetyllysine occurs at positions 32 and 38. Ser117 is modified (phosphoserine). Residues 199–249 (DVVCDVCRSPEGEDGNEMVFCDKCNVCVHQACYGILKVPTGSWLCRTCALG) form a PHD-type 1 zinc finger. The segment at 251-285 (QPKCLLCPKRGGALKPTRSGTKWVHVSCALWIPEV) adopts a C2HC pre-PHD-type zinc-finger fold. The residue at position 298 (Lys298) is an N6-acetyllysine. The PHD-type 2 zinc-finger motif lies at 309 to 365 (LSCSLCKECTGTCIQCSMPSCITAFHVTCAFDRGLEMRTILADNDEVKFKSLCQEHS). 3 disordered regions span residues 362–383 (QEHS…PSQA), 517–555 (REPS…AGPE), and 622–817 (SFMR…REAG). A compositionally biased stretch (basic residues) spans 522–535 (RRSKGKKNDSKRKG). Over residues 536–552 (REGPKGSSPEKKEKVKA) the composition is skewed to basic and acidic residues. A compositionally biased stretch (basic residues) spans 637–650 (KARGRTRLPAKKKP). Basic and acidic residues predominate over residues 776–786 (ERPKVSLHFDT). Residues 792–806 (FSDEEMSDSEVEAED) are compositionally biased toward acidic residues.

The protein belongs to the JADE family. In terms of assembly, component of the HBO1 complex composed at least of ING4 or ING5, MYST2/HBO1, MEAF6, and one of JADE1, JADE2 and JADE3. Interacts (via C-terminus) with KDM1A (via AOD/Tower domain).

The enzyme catalyses S-ubiquitinyl-[E2 ubiquitin-conjugating enzyme]-L-cysteine + [acceptor protein]-L-lysine = [E2 ubiquitin-conjugating enzyme]-L-cysteine + N(6)-ubiquitinyl-[acceptor protein]-L-lysine.. The protein operates within protein modification; protein ubiquitination. Its function is as follows. Scaffold subunit of some HBO1 complexes, which have a histone H4 acetyltransferase activity. Acts as a E3 ubiquitin-protein ligase mediating the ubiquitination and subsequent proteasomal degradation of target protein histone demethylase KDM1A. Also acts as a ubiquitin ligase E3 toward itself. Positive regulator of neurogenesis. This is E3 ubiquitin-protein ligase Jade-2 (Jade2) from Mus musculus (Mouse).